Reading from the N-terminus, the 368-residue chain is POU domain, class 3, transcription factor 1 (368 aa).

Over residues 1–16 (MATTAQYIPRNNSLPS) the composition is skewed to polar residues. Disordered regions lie at residues 1–28 (MATT…DRMH), 69–88 (TDWT…ASVQ), 100–134 (SHLV…NGHQ), and 147–193 (SPQP…PSSD). Over residues 79–88 (QAEHNKASVQ) the composition is skewed to basic and acidic residues. Positions 105–134 (QPTQNSHHGSWAPTTTHHLSPLSPASNGHQ) are enriched in polar residues. A compositionally biased stretch (basic and acidic residues) spans 155-170 (GLRDPLHDDAGSHDNQ). A POU-specific domain is found at 187–261 (EDAPSSDDLE…LLNKWLEETD (75 aa)). Positions 279 to 338 (KRKKRTSIEVGVKGALENHFLKCPKPSAHEITTLAGTLQLEKEVVRVWFCNRRQKEKRMT) form a DNA-binding region, homeobox.

It belongs to the POU transcription factor family. Class-3 subfamily. As to expression, predominantly expressed in the embryonic and adult central nervous system.

Its subcellular location is the nucleus. Transcription factor that may play important roles in patterning the embryonic brain. Could directly respond to the reception of the sonic hedgehog (shh) signal. The protein is POU domain, class 3, transcription factor 1 (pou3f1) of Danio rerio (Zebrafish).